Here is a 1290-residue protein sequence, read N- to C-terminus: 1-phosphatidylinositol 4,5-bisphosphate phosphodiesterase gamma-1 (1290 aa).

At Ala2 the chain carries N-acetylalanine. One can recognise a PH 1 domain in the interval 27-142; sequence RSLEVGTVMT…WIKGLTWLME (116 aa). Positions 152–187 constitute an EF-hand domain; it reads QIERWLRKQFYSVDRNREDRISAKDLKNMLSQVNYR. Ca(2+) is bound by residues Asp165, Asn167, Glu169, Arg171, and Asp176. Residues 320–464 enclose the PI-PLC X-box domain; the sequence is DTMNNPLSHY…LKRKILIKHK (145 aa). Residues His335 and His380 contribute to the active site. The PH 2; first part domain occupies 489 to 523; sequence SIKNGILYLEDPVNHEWYPHYFVLTSSKIYYSEET. At Tyr506 the chain carries Phosphotyrosine. Residues 522-544 are disordered; that stretch reads ETSSDQGNEDEEEPKEVSSSTEL. SH2 domains lie at 550–657 and 668–756; these read WFHG…SEPV and WYHA…RYPI. A Phosphotyrosine; by SYK modification is found at Tyr771. The residue at position 775 (Tyr775) is a Phosphotyrosine. Tyr783 bears the Phosphotyrosine; by ITK, SYK and TXK mark. In terms of domain architecture, SH3 spans 791 to 851; that stretch reads TFKCAVKALF…PSNYVEEMVN (61 aa). The PH 2; second part domain maps to 895–931; that stretch reads FVFSISMASVAHWSLDVAADSQEELQDWVKKIREVAQ. Positions 953 to 1070 constitute a PI-PLC Y-box domain; the sequence is LSELVVYCRP…GYVLQPSTMR (118 aa). Tyr977 carries the phosphotyrosine modification. Positions 1071–1194 constitute a C2 domain; the sequence is DEAFDPFDKS…TGYRAVPLKN (124 aa). Phosphoserine is present on residues Ser1221, Pro1222, Ser1227, Ser1233, and Ser1248. The residue at position 1253 (Tyr1253) is a Phosphotyrosine. Ser1263 carries the post-translational modification Phosphoserine. The tract at residues 1271–1290 is disordered; that stretch reads FDSRERRAPRRTRVNGDNRL.

As to quaternary structure, interacts with AGAP2 via its SH3 domain. Interacts (via SH2 domain) with RET. Interacts with FLT1 (tyrosine-phosphorylated). Interacts (via SH2 domain) with FGFR1, FGFR2, FGFR3 and FGFR4 (phosphorylated). Interacts with LAT (phosphorylated) upon TCR activation. Interacts (via SH3 domain) with the Pro-rich domain of TNK1. Associates with BLNK, VAV1, GRB2 and NCK1 in a B-cell antigen receptor-dependent fashion. Interacts with CBLB in activated T-cells; which inhibits phosphorylation. Interacts with SHB. Interacts (via SH3 domain) with the Arg/Gly-rich-flanked Pro-rich domains of KHDRBS1/SAM68. This interaction is selectively regulated by arginine methylation of KHDRBS1/SAM68. Interacts with INPP5D/SHIP1, THEMIS and CLNK. Interacts with AXL, FLT4 and KIT. Interacts with RALGPS1. Interacts (via the SH2 domains) with VIL1 (phosphorylated at C-terminus tyrosine phosphorylation sites). Interacts (via SH2 domain) with PDGFRA and PDGFRB (tyrosine phosphorylated). Interacts with PIP5K1C. Interacts with NTRK1 and NTRK2 (phosphorylated upon ligand-binding). Interacts with SYK; activates PLCG1. Interacts with GRB2, LAT and THEMIS upon TCR activation in thymocytes. Interacts with TESPA1; the association is increased with prolonged stimulation of the TCR and may facilitate the assembly of the LAT signalosome. Interacts (via C-terminal proline-rich domain (PRD)) with PLCG1 (via SH3 domain); this interaction leads to guanine nucleotide exchange from PlCG1 to DNM1 and enhances DNM1-dependent endocytosis. (Microbial infection) Interacts (via SH3 domain) with HEV ORF3 protein. Ca(2+) serves as cofactor. Post-translationally, tyrosine phosphorylated in response to signaling via activated FLT3, KIT and PDGFRA. Tyrosine phosphorylated by activated FGFR1, FGFR2, FGFR3 and FGFR4. Tyrosine phosphorylated by activated FLT1 and KDR. Tyrosine phosphorylated by activated PDGFRB. The receptor-mediated activation of PLCG1 involves its phosphorylation by tyrosine kinases, in response to ligation of a variety of growth factor receptors and immune system receptors. For instance, SYK phosphorylates and activates PLCG1 in response to ligation of the B-cell receptor. May be dephosphorylated by PTPRJ. Phosphorylated by ITK and TXK on Tyr-783 upon TCR activation in T-cells. In terms of processing, ubiquitinated by CBLB in activated T-cells.

The protein resides in the cell projection. Its subcellular location is the lamellipodium. It localises to the ruffle. It carries out the reaction a 1,2-diacyl-sn-glycero-3-phospho-(1D-myo-inositol-4,5-bisphosphate) + H2O = 1D-myo-inositol 1,4,5-trisphosphate + a 1,2-diacyl-sn-glycerol + H(+). It catalyses the reaction a 1,2-diacyl-sn-glycero-3-phospho-(1D-myo-inositol) + H2O = 1D-myo-inositol 1-phosphate + a 1,2-diacyl-sn-glycerol + H(+). Its activity is regulated as follows. Activated by phosphorylation on tyrosine residues. Mediates the production of the second messenger molecules diacylglycerol (DAG) and inositol 1,4,5-trisphosphate (IP3). Plays an important role in the regulation of intracellular signaling cascades. Becomes activated in response to ligand-mediated activation of receptor-type tyrosine kinases, such as PDGFRA, PDGFRB, EGFR, FGFR1, FGFR2, FGFR3 and FGFR4. Plays a role in actin reorganization and cell migration. Guanine nucleotide exchange factor that binds the GTPase DNM1 and catalyzes the dissociation of GDP, allowing a GTP molecule to bind in its place, therefore enhancing DNM1-dependent endocytosis. This chain is 1-phosphatidylinositol 4,5-bisphosphate phosphodiesterase gamma-1, found in Homo sapiens (Human).